The chain runs to 430 residues: Enolase (430 aa).

Gln163 is a (2R)-2-phosphoglycerate binding site. The active-site Proton donor is Glu205. Residues Asp242, Glu287, and Asp314 each coordinate Mg(2+). Lys339, Arg368, Ser369, and Lys390 together coordinate (2R)-2-phosphoglycerate. The active-site Proton acceptor is Lys339.

It belongs to the enolase family. It depends on Mg(2+) as a cofactor.

The protein localises to the cytoplasm. Its subcellular location is the secreted. It localises to the cell surface. It carries out the reaction (2R)-2-phosphoglycerate = phosphoenolpyruvate + H2O. It functions in the pathway carbohydrate degradation; glycolysis; pyruvate from D-glyceraldehyde 3-phosphate: step 4/5. Catalyzes the reversible conversion of 2-phosphoglycerate (2-PG) into phosphoenolpyruvate (PEP). It is essential for the degradation of carbohydrates via glycolysis. The protein is Enolase of Clostridioides difficile (strain 630) (Peptoclostridium difficile).